The following is a 142-amino-acid chain: Putative pre-16S rRNA nuclease (142 aa).

The protein belongs to the YqgF nuclease family.

The protein localises to the cytoplasm. In terms of biological role, could be a nuclease involved in processing of the 5'-end of pre-16S rRNA. The protein is Putative pre-16S rRNA nuclease of Lactobacillus helveticus (strain DPC 4571).